A 107-amino-acid polypeptide reads, in one-letter code: Universal stress protein B homolog (107 aa).

2 helical membrane passes run 6–23 (TILF…ARYF) and 89–106 (LFIL…SSFI).

This sequence belongs to the universal stress protein B family.

It localises to the cell inner membrane. In Vibrio atlanticus (strain LGP32) (Vibrio splendidus (strain Mel32)), this protein is Universal stress protein B homolog.